A 518-amino-acid chain; its full sequence is 3-octaprenyl-4-hydroxybenzoate carboxy-lyase (518 aa).

Asparagine 177 lines the Mn(2+) pocket. Prenylated FMN-binding positions include 180–182 (IYR), 194–196 (RWL), and 199–200 (RG). Glutamate 243 is a Mn(2+) binding site. Catalysis depends on aspartate 318, which acts as the Proton donor.

Belongs to the UbiD family. As to quaternary structure, homohexamer. Requires prenylated FMN as cofactor. Mn(2+) is required as a cofactor.

Its subcellular location is the cell membrane. It catalyses the reaction a 4-hydroxy-3-(all-trans-polyprenyl)benzoate + H(+) = a 2-(all-trans-polyprenyl)phenol + CO2. Its pathway is cofactor biosynthesis; ubiquinone biosynthesis. Catalyzes the decarboxylation of 3-octaprenyl-4-hydroxy benzoate to 2-octaprenylphenol, an intermediate step in ubiquinone biosynthesis. The polypeptide is 3-octaprenyl-4-hydroxybenzoate carboxy-lyase (Burkholderia orbicola (strain AU 1054)).